The chain runs to 394 residues: Phosphoglycerate kinase (394 aa).

Substrate contacts are provided by residues 21–23 (DFN), Arg37, 60–63 (HLGR), Arg119, and Arg152. ATP-binding positions include Lys202, Glu324, and 350 to 353 (GGDS).

Belongs to the phosphoglycerate kinase family. Monomer.

The protein resides in the cytoplasm. It carries out the reaction (2R)-3-phosphoglycerate + ATP = (2R)-3-phospho-glyceroyl phosphate + ADP. Its pathway is carbohydrate degradation; glycolysis; pyruvate from D-glyceraldehyde 3-phosphate: step 2/5. The polypeptide is Phosphoglycerate kinase (Carboxydothermus hydrogenoformans (strain ATCC BAA-161 / DSM 6008 / Z-2901)).